The primary structure comprises 327 residues: Methionine import ATP-binding protein MetN (327 aa).

Positions 3–239 constitute an ABC transporter domain; the sequence is VELKNIEKIY…PKHAVTKELL (237 aa). Position 36 to 43 (36 to 43) interacts with ATP; sequence GYSGAGKS.

This sequence belongs to the ABC transporter superfamily. Methionine importer (TC 3.A.1.24) family. As to quaternary structure, the complex is composed of two ATP-binding proteins (MetN), two transmembrane proteins (MetI) and a solute-binding protein (MetQ).

The protein localises to the cell inner membrane. The enzyme catalyses L-methionine(out) + ATP + H2O = L-methionine(in) + ADP + phosphate + H(+). It catalyses the reaction D-methionine(out) + ATP + H2O = D-methionine(in) + ADP + phosphate + H(+). Its function is as follows. Part of the ABC transporter complex MetNIQ involved in methionine import. Responsible for energy coupling to the transport system. In Helicobacter pylori (strain ATCC 700392 / 26695) (Campylobacter pylori), this protein is Methionine import ATP-binding protein MetN.